The following is a 347-amino-acid chain: 2-hydroxyacid dehydrogenase A (347 aa).

NAD(+) contacts are provided by residues Arg-157–Ile-158, Asp-177, Thr-234–Arg-236, and Asp-260. Arg-236 is a catalytic residue. The active site involves Glu-265.

Belongs to the D-isomer specific 2-hydroxyacid dehydrogenase family.

The enzyme catalyses a (2R)-2-hydroxycarboxylate + NADP(+) = a 2-oxocarboxylate + NADPH + H(+). 2-hydroxyacid dehydrogenase that is capable to reduce pyruvate, hydroxypyruvate and glyoxylate in a NADPH- or NADH-dependent manner. In contrast to 2-HadhD/morA, does not recognize 4-methyl-2-oxopentanoate (MOA) as a substrate. The protein is 2-hydroxyacid dehydrogenase A of Aspergillus oryzae (strain ATCC 42149 / RIB 40) (Yellow koji mold).